The following is an 87-amino-acid chain: Small ribosomal subunit protein uS15 (87 aa).

Belongs to the universal ribosomal protein uS15 family. As to quaternary structure, part of the 30S ribosomal subunit. Forms a bridge to the 50S subunit in the 70S ribosome, contacting the 23S rRNA.

In terms of biological role, one of the primary rRNA binding proteins, it binds directly to 16S rRNA where it helps nucleate assembly of the platform of the 30S subunit by binding and bridging several RNA helices of the 16S rRNA. Functionally, forms an intersubunit bridge (bridge B4) with the 23S rRNA of the 50S subunit in the ribosome. The chain is Small ribosomal subunit protein uS15 from Dehalococcoides mccartyi (strain ATCC BAA-2100 / JCM 16839 / KCTC 5957 / BAV1).